The following is a 132-amino-acid chain: Small ribosomal subunit protein uS8 (132 aa).

The protein belongs to the universal ribosomal protein uS8 family. As to quaternary structure, part of the 30S ribosomal subunit. Contacts proteins S5 and S12.

One of the primary rRNA binding proteins, it binds directly to 16S rRNA central domain where it helps coordinate assembly of the platform of the 30S subunit. This is Small ribosomal subunit protein uS8 from Macrococcus caseolyticus (strain JCSC5402) (Macrococcoides caseolyticum).